The following is a 348-amino-acid chain: Protein RecA (348 aa).

64–71 is a binding site for ATP; it reads GPESSGKT. Residues 325 to 335 show a composition bias toward basic and acidic residues; sequence YEIDGANKEPL. The disordered stretch occupies residues 325-348; sequence YEIDGANKEPLEETEETLSLLDDE. Acidic residues predominate over residues 336-348; that stretch reads EETEETLSLLDDE.

It belongs to the RecA family.

It localises to the cytoplasm. Can catalyze the hydrolysis of ATP in the presence of single-stranded DNA, the ATP-dependent uptake of single-stranded DNA by duplex DNA, and the ATP-dependent hybridization of homologous single-stranded DNAs. It interacts with LexA causing its activation and leading to its autocatalytic cleavage. This chain is Protein RecA, found in Listeria welshimeri serovar 6b (strain ATCC 35897 / DSM 20650 / CCUG 15529 / CIP 8149 / NCTC 11857 / SLCC 5334 / V8).